We begin with the raw amino-acid sequence, 429 residues long: D-amino acid dehydrogenase (429 aa).

3-17 serves as a coordination point for FAD; it reads VLILGSGVIGTTTAW.

Belongs to the DadA oxidoreductase family. FAD serves as cofactor.

The enzyme catalyses a D-alpha-amino acid + A + H2O = a 2-oxocarboxylate + AH2 + NH4(+). Its pathway is amino-acid degradation; D-alanine degradation; NH(3) and pyruvate from D-alanine: step 1/1. Oxidative deamination of D-amino acids. This chain is D-amino acid dehydrogenase, found in Xanthomonas campestris pv. campestris (strain B100).